The chain runs to 351 residues: Ferrochelatase (351 aa).

Fe cation is bound by residues His184 and Glu265.

Belongs to the ferrochelatase family.

Its subcellular location is the cytoplasm. It carries out the reaction heme b + 2 H(+) = protoporphyrin IX + Fe(2+). It participates in porphyrin-containing compound metabolism; protoheme biosynthesis; protoheme from protoporphyrin-IX: step 1/1. In terms of biological role, catalyzes the ferrous insertion into protoporphyrin IX. The chain is Ferrochelatase from Rhodopirellula baltica (strain DSM 10527 / NCIMB 13988 / SH1).